Consider the following 557-residue polypeptide: Aerobic glycerol-3-phosphate dehydrogenase (557 aa).

21 to 49 is a binding site for FAD; that stretch reads DVVIVGGGITGAGIALDASNRGMKVALVE.

This sequence belongs to the FAD-dependent glycerol-3-phosphate dehydrogenase family. The cofactor is FAD.

The protein localises to the cytoplasm. It carries out the reaction a quinone + sn-glycerol 3-phosphate = dihydroxyacetone phosphate + a quinol. It functions in the pathway polyol metabolism; glycerol degradation via glycerol kinase pathway; glycerone phosphate from sn-glycerol 3-phosphate (aerobic route): step 1/1. This chain is Aerobic glycerol-3-phosphate dehydrogenase (glpD), found in Staphylococcus epidermidis (strain ATCC 35984 / DSM 28319 / BCRC 17069 / CCUG 31568 / BM 3577 / RP62A).